The following is a 200-amino-acid chain: ATP-dependent Clp protease proteolytic subunit (200 aa).

Serine 101 (nucleophile) is an active-site residue. Histidine 126 is a catalytic residue.

Belongs to the peptidase S14 family. Component of the chloroplastic Clp protease core complex.

The protein resides in the plastid. Its subcellular location is the chloroplast stroma. The catalysed reaction is Hydrolysis of proteins to small peptides in the presence of ATP and magnesium. alpha-casein is the usual test substrate. In the absence of ATP, only oligopeptides shorter than five residues are hydrolyzed (such as succinyl-Leu-Tyr-|-NHMec, and Leu-Tyr-Leu-|-Tyr-Trp, in which cleavage of the -Tyr-|-Leu- and -Tyr-|-Trp bonds also occurs).. Its function is as follows. Cleaves peptides in various proteins in a process that requires ATP hydrolysis. Has a chymotrypsin-like activity. Plays a major role in the degradation of misfolded proteins. In Ostreococcus tauri, this protein is ATP-dependent Clp protease proteolytic subunit.